The primary structure comprises 910 residues: ZZ-type zinc finger-containing protein 3 (910 aa).

Disordered stretches follow at residues 41–117 (AHPE…RQAE) and 133–153 (EATNSSEEDSPVKPDKEPGEH). Residues 67-84 (QKGTNNGRTSDVRQQSAR) show a composition bias toward polar residues. S89, S96, S137, S138, and S142 each carry phosphoserine. Residues 96–116 (SSSEKDDLERQALESCERRQA) show a composition bias toward basic and acidic residues. The segment covering 142 to 153 (SPVKPDKEPGEH) has biased composition (basic and acidic residues). K283 is covalently cross-linked (Glycyl lysine isopeptide (Lys-Gly) (interchain with G-Cter in SUMO2)). 3 disordered regions span residues 303-358 (TAES…VSGE), 373-444 (TSLS…PQDG), and 609-641 (ARPKSPLDPKKDGESLSYSMLPLSDGPEGSHNR). Polar residues-rich tracts occupy residues 331–347 (SSASKEQCNENSSNPLD) and 397–434 (SSPTKTTSPYRENGQLEETNLSPQETNTTVSDHVSESP). Position 401 is an N6-acetyllysine (K401). Position 613 is a phosphoserine (S613). Basic and acidic residues predominate over residues 613–622 (SPLDPKKDGE). K654 is covalently cross-linked (Glycyl lysine isopeptide (Lys-Gly) (interchain with G-Cter in SUMO2)). The 61-residue stretch at 654–714 (KPETFNQLWT…RVQKYFIKLT (61 aa)) folds into the HTH myb-type domain. The H-T-H motif DNA-binding region spans 687 to 710 (WQKIADELGNRTAKQVASRVQKYF). At K708 the chain carries N6-acetyllysine. K715 is covalently cross-linked (Glycyl lysine isopeptide (Lys-Gly) (interchain with G-Cter in SUMO2)). The ZZ-type zinc finger occupies 825-884 (HVGFKCDNCGVEPIQGVRWHCQDCPPEMSLDFCDSCSDCPHETDIHKEDHQLEPVYKSET). Residues C830, C833, C845, C848, C857, C860, H870, and H874 each coordinate Zn(2+).

As to quaternary structure, component of the ADA2A-containing complex (ATAC), composed of KAT14, KAT2A, TADA2L, TADA3L, ZZ3, MBIP, WDR5, YEATS2, CCDC101 and DR1. Interacts via (ZZ-type zinc finger) with histone H3 in a methylation-independent manner and acetylation on 'Lys-4' (H3K4ac) moderately enhances the interaction.

It localises to the nucleus. Functionally, histone H3 reader that is required for the ATAC complex-mediated maintenance of histone acetylation and gene activation. Component of the ATAC complex, a complex with histone acetyltransferase activity on histones H3 and H4. This is ZZ-type zinc finger-containing protein 3 (Zzz3) from Mus musculus (Mouse).